A 235-amino-acid chain; its full sequence is Large ribosomal subunit protein bL25 (235 aa).

2 disordered regions span residues 1–21 and 210–235; these read MADNIINAQRREEKGKGPARR and APAAGAAPAAGGEAAKKAPEAKGAKK. Residues 210–222 are compositionally biased toward low complexity; it reads APAAGAAPAAGGE. Over residues 223-235 the composition is skewed to basic and acidic residues; it reads AAKKAPEAKGAKK.

This sequence belongs to the bacterial ribosomal protein bL25 family. CTC subfamily. As to quaternary structure, part of the 50S ribosomal subunit; part of the 5S rRNA/L5/L18/L25 subcomplex. Contacts the 5S rRNA. Binds to the 5S rRNA independently of L5 and L18.

In terms of biological role, this is one of the proteins that binds to the 5S RNA in the ribosome where it forms part of the central protuberance. This is Large ribosomal subunit protein bL25 from Anaeromyxobacter sp. (strain Fw109-5).